The primary structure comprises 236 residues: Eukaryotic translation initiation factor 3 subunit K (236 aa).

Residues 48 to 218 (CDCNANRTLL…EAKKAEIRED (171 aa)) enclose the PCI domain.

This sequence belongs to the eIF-3 subunit K family.

Its subcellular location is the cytoplasm. Component of the eukaryotic translation initiation factor 3 (eIF-3) complex, which is involved in protein synthesis of a specialized repertoire of mRNAs and, together with other initiation factors, stimulates binding of mRNA and methionyl-tRNAi to the 40S ribosome. The eIF-3 complex specifically targets and initiates translation of a subset of mRNAs involved in cell proliferation. The polypeptide is Eukaryotic translation initiation factor 3 subunit K (Pyricularia oryzae (strain Y34) (Rice blast fungus)).